The sequence spans 82 residues: Small ribosomal subunit protein bS16 (82 aa).

Belongs to the bacterial ribosomal protein bS16 family.

The polypeptide is Small ribosomal subunit protein bS16 (Salmonella agona (strain SL483)).